The sequence spans 382 residues: Inactive ubiquitin-specific protease 5 (382 aa).

In terms of domain architecture, DUSP spans 16–141; sequence VPAEEERALI…GGPTLPRKAI (126 aa). The USP domain occupies 323 to 382; that stretch reads TGLLNLGNTCFMNSAIQCLVHTPEFARYFREDYHREINWQNPLGMVVSTLSTSMALKPYV.

This sequence belongs to the peptidase C19 family. Widely expressed with the highest expression in floral organs.

The protein resides in the cell membrane. Plays an important role in the development of floral organs and chloroplasts. Does not possess deubiquitinating enzyme activity in vitro. The protein is Inactive ubiquitin-specific protease 5 of Oryza sativa subsp. japonica (Rice).